Reading from the N-terminus, the 466-residue chain is MGSSSLLSFSLCLLLLCHLSQAQFGSSQESPFQSPRRSVSSRNECRIERLNALEPTRTVRSEAGVTDYFDEDNEQFRCAGVSTIRRVIEPRGLLLPSMSNAPRLVYIVQGRGIVGLVMPGCPETFQSFQRSEREEGERHRWSRDEHQKVYQFQEGDVLAVPNGFAYWCYNNGENPVVAITVLDTSNDANQLDRSHRQFLLAGRQEQGRQRYGREGSIKENILRGFSTELLAAAFGVNMELARKLQCRDDTRGEIVRAENGLQVLRPSGMEEEEREEGRSINGFEETYCSMKIKQNIGDPRRADVFNPRGGRITTLNSEKLPILRFIQMSAERVVLYRNAMVSPHWNINAHSIMYCTGGRGRVEVADDRGETVFDGELRQGQLLIVPQNFAMLERAGSEGFQLVSIKTSDRAMVSTIVGKTSALRGMPVEVLMNSYRLSRDEARRVKLTRGDEVAIFTPRRESRAEA.

Residues 1–22 form the signal peptide; the sequence is MGSSSLLSFSLCLLLLCHLSQA. Intrachain disulfides connect Cys-45/Cys-78 and Cys-121/Cys-288. Cupin type-1 domains are found at residues 50-242 and 294-443; these read LNAL…ELAR and QNIG…DEAR.

It belongs to the 11S seed storage protein (globulins) family. As to quaternary structure, hexamer; each subunit is composed of an acidic and a basic chain derived from a single precursor and linked by a disulfide bond. Endosperm of the seeds.

Its function is as follows. Seed storage protein. The polypeptide is Cocosin 1 (Cocos nucifera (Coconut palm)).